Consider the following 255-residue polypeptide: 4-hydroxy-tetrahydrodipicolinate reductase (255 aa).

Residues Gly-13–Met-18, Cys-90–Thr-92, and Ser-114–Met-117 each bind NAD(+). His-147 (proton donor/acceptor) is an active-site residue. His-148 is a binding site for (S)-2,3,4,5-tetrahydrodipicolinate. The active-site Proton donor is the Lys-151. Gly-157–Thr-158 lines the (S)-2,3,4,5-tetrahydrodipicolinate pocket.

The protein belongs to the DapB family.

It localises to the cytoplasm. It carries out the reaction (S)-2,3,4,5-tetrahydrodipicolinate + NAD(+) + H2O = (2S,4S)-4-hydroxy-2,3,4,5-tetrahydrodipicolinate + NADH + H(+). The enzyme catalyses (S)-2,3,4,5-tetrahydrodipicolinate + NADP(+) + H2O = (2S,4S)-4-hydroxy-2,3,4,5-tetrahydrodipicolinate + NADPH + H(+). Its pathway is amino-acid biosynthesis; L-lysine biosynthesis via DAP pathway; (S)-tetrahydrodipicolinate from L-aspartate: step 4/4. Catalyzes the conversion of 4-hydroxy-tetrahydrodipicolinate (HTPA) to tetrahydrodipicolinate. The protein is 4-hydroxy-tetrahydrodipicolinate reductase of Clostridium tetani (strain Massachusetts / E88).